Consider the following 314-residue polypeptide: Nodulation protein D 1 (314 aa).

One can recognise an HTH lysR-type domain in the interval 6–63 (LDLNLLVALDAVMTARNLTAAARKINLSQPAMSAAIARLRTYFRDELFTMRGRELVPT). The H-T-H motif DNA-binding region spans 23 to 42 (LTAAARKINLSQPAMSAAIA).

It belongs to the LysR transcriptional regulatory family.

Functionally, nodD regulates the expression of the nodABCFE genes which encode other nodulation proteins. NodD is also a negative regulator of its own expression. Binds flavonoids as inducers. In Bradyrhizobium diazoefficiens (strain JCM 10833 / BCRC 13528 / IAM 13628 / NBRC 14792 / USDA 110), this protein is Nodulation protein D 1 (nodD1).